The following is a 328-amino-acid chain: E3 ubiquitin-protein ligase RING1-like (328 aa).

An N-acetylserine modification is found at Ser2. The RING-type; atypical zinc-finger motif lies at 216–257 (CAVCMDEFEDGSDVKQMPCKHVFHQDCLLPWLELHNSCPVCR). Residues 264-328 (DPDYENRSQG…NLETRGEDLD (65 aa)) form a disordered region. Residues 306 to 319 (SGSGSGAPGTGGGN) show a composition bias toward gly residues.

Post-translationally, auto-ubiquitinated as part of the enzymatic reaction. As to expression, expressed in leaves, roots, trichomes, stipules, and also in anthers and stigma of flowers.

It carries out the reaction S-ubiquitinyl-[E2 ubiquitin-conjugating enzyme]-L-cysteine + [acceptor protein]-L-lysine = [E2 ubiquitin-conjugating enzyme]-L-cysteine + N(6)-ubiquitinyl-[acceptor protein]-L-lysine.. Its pathway is protein modification; protein ubiquitination. Functionally, E3 ubiquitin-protein ligase which accepts ubiquitin from an E2 ubiquitin-conjugating enzyme in the form of a thioester and then directly transfers the ubiquitin to targeted substrates. Promotes polyubiquitination of target proteins. The sequence is that of E3 ubiquitin-protein ligase RING1-like from Arabidopsis thaliana (Mouse-ear cress).